Reading from the N-terminus, the 322-residue chain is Solute carrier family 35 member B1 (322 aa).

A run of 8 helical transmembrane segments spans residues 12–32, 51–71, 85–105, 136–156, 168–188, 210–230, 243–263, and 285–305; these read LRLP…GILQ, FALT…KILI, WLYA…NSAL, YPLA…LFMY, TVGF…LTGV, LWST…WEFL, ILLF…TVVY, and VILF…LVFL. The Di-lysine motif motif lies at 318–322; that stretch reads KKTSH.

This sequence belongs to the nucleotide-sugar transporter family. SLC35B subfamily.

It localises to the endoplasmic reticulum membrane. The catalysed reaction is ADP(in) + ATP(out) = ADP(out) + ATP(in). The enzyme catalyses UDP(out) + ATP(in) = UDP(in) + ATP(out). It catalyses the reaction UTP(out) + ATP(in) = UTP(in) + ATP(out). It carries out the reaction dATP(out) + ATP(in) = dATP(in) + ATP(out). ATP:ADP antiporter that catalyzes the exchange of ATP and ADP across the endoplasmic reticulum (ER) membrane. Imports ATP from the cytosol to the ER lumen and exports ADP in the opposite direction. Regulates ER energy metabolism and protein biogenesis. Appears to be part of a calcium-dependent ER to cytosol low energy response axis, where calcium efflux from ER to the cytosol triggers ATP import into the ER lumen to maintain sufficient ATP supply. Provides ATP to ER chaperone HSPA5 that drives protein folding and trafficking in the ER. Can transport dATP, UTP or UDP in exchange for ATP, but the physiological relevance of this process remains to be established. In Rattus norvegicus (Rat), this protein is Solute carrier family 35 member B1 (Slc35b1).